The primary structure comprises 273 residues: Putative esterase/lipase 3 (273 aa).

The active site involves His-34. Ser-100 functions as the Charge relay system in the catalytic mechanism.

This sequence belongs to the lipase/esterase LIP3/BchO family.

In Mycoplasma genitalium (strain ATCC 33530 / DSM 19775 / NCTC 10195 / G37) (Mycoplasmoides genitalium), this protein is Putative esterase/lipase 3.